The sequence spans 104 residues: UPF0213 protein PA3854 (104 aa).

In terms of domain architecture, GIY-YIG spans 13–88; sequence KCWSVYLVRA…KALSKRAKER (76 aa).

It belongs to the UPF0213 family.

This Pseudomonas aeruginosa (strain ATCC 15692 / DSM 22644 / CIP 104116 / JCM 14847 / LMG 12228 / 1C / PRS 101 / PAO1) protein is UPF0213 protein PA3854.